A 200-amino-acid chain; its full sequence is Holliday junction resolvase RecU (200 aa).

Residues 1–27 are disordered; the sequence is MALKYPSGKEYRGNKPNAARRPAADYA. Mg(2+)-binding residues include Thr84, Asp86, Glu99, and Gln118.

This sequence belongs to the RecU family. Homodimer. It depends on Mg(2+) as a cofactor.

It is found in the cytoplasm. It catalyses the reaction Endonucleolytic cleavage at a junction such as a reciprocal single-stranded crossover between two homologous DNA duplexes (Holliday junction).. Its function is as follows. Endonuclease that resolves Holliday junction intermediates in genetic recombination. Cleaves mobile four-strand junctions by introducing symmetrical nicks in paired strands. Promotes annealing of linear ssDNA with homologous dsDNA. Required for DNA repair, homologous recombination and chromosome segregation. The polypeptide is Holliday junction resolvase RecU (Geobacillus kaustophilus (strain HTA426)).